The primary structure comprises 556 residues: MQREYDYIIIGAGSAGNVLAARLTEDPGVTVLLLEAGGPDYRVDFRTQMPAALAFPLQGRRYNWAYETEPEPYMDNRRMECGRGKGLGGSSLINGMCYIRGNALDFDHWAKRPGLEDWSYRDVLPYFRKAETRDIGANDYHGGDGPVSVATPKNDNNVLFHAMVEAGVQAGYPRTGDLNGYQQEGFGPMDRTVTPRGRRASTARGYLDMAKPRDGLHIVTHATTDRILFAGKRAIGVHYLVGNSSEGIDAHARREVLVCAGAIASPQLLQRSGVGAPDLLRALDVQLVHDLPGVGQNLQDHLEVYIQYACTKPVSLYPALQWWNQPAIGAQWLFAGTGTGASNQFEAGGFIRTREEFDWPNIQYHFLPVAINYNGSNAVKEHGFQAHVGSMRTPSRGRVHAKSRDPRQHPSILFNYQSTDQDWQEFRDAIRITREIIAQPALDAYRGREISPSADCKTDAELDAFVRSRAETAYHPSCSCAMGTDAMAVVDGQGRVHGMEGLRVIDASIMPRIITGNLNATTIMIAEKIADRVRGRTPLPRSTADYYIAGDAPVRG.

FAD is bound at residue 6 to 35 (DYIIIGAGSAGNVLAARLTEDPGVTVLLLE). The Proton acceptor role is filled by histidine 475.

The protein belongs to the GMC oxidoreductase family. Requires FAD as cofactor.

It catalyses the reaction choline + A = betaine aldehyde + AH2. The enzyme catalyses betaine aldehyde + NAD(+) + H2O = glycine betaine + NADH + 2 H(+). The protein operates within amine and polyamine biosynthesis; betaine biosynthesis via choline pathway; betaine aldehyde from choline (cytochrome c reductase route): step 1/1. Functionally, involved in the biosynthesis of the osmoprotectant glycine betaine. Catalyzes the oxidation of choline to betaine aldehyde and betaine aldehyde to glycine betaine at the same rate. The sequence is that of Oxygen-dependent choline dehydrogenase from Xanthomonas axonopodis pv. citri (strain 306).